Here is a 118-residue protein sequence, read N- to C-terminus: Small ribosomal subunit protein uS13 (118 aa).

Positions 94–118 (GLPVRGQRTKTNARTRKGPRKPIKK) are disordered.

This sequence belongs to the universal ribosomal protein uS13 family. Part of the 30S ribosomal subunit. Forms a loose heterodimer with protein S19. Forms two bridges to the 50S subunit in the 70S ribosome.

Functionally, located at the top of the head of the 30S subunit, it contacts several helices of the 16S rRNA. In the 70S ribosome it contacts the 23S rRNA (bridge B1a) and protein L5 of the 50S subunit (bridge B1b), connecting the 2 subunits; these bridges are implicated in subunit movement. Contacts the tRNAs in the A and P-sites. The protein is Small ribosomal subunit protein uS13 of Klebsiella pneumoniae (strain 342).